A 92-amino-acid polypeptide reads, in one-letter code: MPRSLKKGPFIDLHLLKKVEKAVESGDKKPIKTWSRRSMIIPTMIGLTIAVHNGRQHVPVFVTEEMIGHKLGEFAPTRTYRGHAADKKAKKK.

The protein belongs to the universal ribosomal protein uS19 family.

Its function is as follows. Protein S19 forms a complex with S13 that binds strongly to the 16S ribosomal RNA. In Vibrio atlanticus (strain LGP32) (Vibrio splendidus (strain Mel32)), this protein is Small ribosomal subunit protein uS19.